A 4836-amino-acid chain; its full sequence is E3 ubiquitin-protein ligase HERC2 (4836 aa).

The disordered stretch occupies residues 58-90; sequence LPLRKDDGVDAQSGTKKEDLNDKEKKEEEETPA. A compositionally biased stretch (basic and acidic residues) spans 72 to 85; the sequence is TKKEDLNDKEKKEE. Thr-273 carries the post-translational modification Phosphothreonine. The RCC1 1-1 repeat unit spans residues 416–462; that stretch reads PTSHKGSLQEVIGWGLIGWKYYANVIGPIQCEGLASLGVMQVACAEK. The RCC1 1-2 repeat unit spans residues 463–513; that stretch reads RFLILSRNGRVYTQAYNSDMLAPQLVQGLASRNIVKIAAHSDGHHYLALAA. The RCC1 1-3 repeat unit spans residues 514–569; sequence TGEVYSWGCGDGGRLGHGDTVPLEEPKVISAFSGKQAGKHVVHIACGSTYSAAITA. Residues 570-621 form an RCC1 1-4 repeat; that stretch reads EGELYTWGRGNYGRLGHGSSEDEAIPMLVAGLKGLKVIDVACGSGDAQTLAV. The RCC1 1-5 repeat unit spans residues 624–675; sequence NGQVWSWGDGDYGKLGRGGSDGCKTPKLIEKLQDLDVIKVRCGSQFSIALTK. The residue at position 648 (Thr-648) is a Phosphothreonine. One copy of the RCC1 1-6 repeat lies at 676–727; it reads DGQVYSWGKGDNQRLGHGTEEHVRYPKLLEGLQGKKVIDVAAGSTHCLALTE. Residues 729–779 form an RCC1 1-7 repeat; the sequence is SEVHSWGSNDQCQHFDTLRVTKPEPTALPGLDSKHIVGIACGPAQSFAWSS. Residues 948 to 981 adopt a coiled-coil conformation; it reads ALNAAITAEIQDIEAKKEAQKEKEIDEQEASAST. The Cytochrome b5 heme-binding domain maps to 1208–1284; sequence VTLIRKADLE…MHAFCVGQYL (77 aa). Residue Ser-1578 is modified to Phosphoserine. Residues 1860 to 1933 enclose the MIB/HERC2 domain; it reads SGPELAAMMK…KYDLKLVELP (74 aa). Ser-1943 bears the Phosphoserine mark. Phosphothreonine is present on Thr-1945. The interval 2351-2376 is disordered; sequence GTGTLQTDDGAAASPDLGDMSPEGPQ. Position 2455 is a phosphoserine (Ser-2455). Positions 2555-2631 constitute a CPH domain; sequence RADFLSNDDY…RYIHVELIGY (77 aa). The ZZ-type zinc finger occupies 2704 to 2756; it reads HPGVTCDGCQTFPINGSRFKCRNCDDFDFCETCFKTKKHNTRHTFGRINEPGQ. Positions 2709, 2712, 2724, 2727, 2733, 2736, 2742, and 2746 each coordinate Zn(2+). The region spanning 2760–2937 is the DOC domain; it reads FCGRSGKQLK…ASDNEEEEDD (178 aa). The interval 2928–2947 is disordered; the sequence is ASDNEEEEDDKGSTGSLIRK. Position 2929 is a phosphoserine (Ser-2929). Residues 2959–3010 form an RCC1 2-1 repeat; it reads RTKVFVWGLNDKDQLGGLKGSKIKVPSFSETLSALNVVQVAGGSKSLFAVTV. The stretch at 3011–3065 is one RCC1 2-2 repeat; that stretch reads EGKVYSCGEATNGRLGLGMSSGTVPIPRQITALSSYVVKKVAVHSGGRHATALTV. Residues 3066–3117 form an RCC1 2-3 repeat; the sequence is DGKVFSWGEGDDGKLGHFSRMNCDKPRLIEALKTKRIRDIACGSSHSAALTS. One copy of the RCC1 2-4 repeat lies at 3119–3169; it reads GELYTWGLGEYGRLGHGDNTTQLKPKMVKVLLGHRVIQVACGSRDAQTLAL. The stretch at 3172–3223 is one RCC1 2-5 repeat; sequence EGLVFSWGDGDFGKLGRGGSEGCNIPQNIERLNGQGVCQIECGAQFSLALTK. The RCC1 2-6 repeat unit spans residues 3225–3275; it reads GVVWTWGKGDYFRLGHGSDVHVRKPQVVEGLRGKKIVHVAVGALHCLAVTD. Residues 3276 to 3327 form an RCC1 2-7 repeat; that stretch reads SGQVYAWGDNDHGQQGNGTTTVNRKPTLVQGLEGQKITRVACGSSHSVAWTT. Disordered regions lie at residues 3479–3499, 3517–3537, and 3604–3632; these read DAVT…RPFI, KTKE…QSLD, and SQSG…SGTV. Positions 3480–3495 are enriched in low complexity; sequence AVTPSAVTPSAPSASS. 2 stretches are compositionally biased toward polar residues: residues 3604 to 3613 and 3620 to 3631; these read SQSGRLSSQP and HPYTDDTSTSGT. The RCC1 3-1 repeat unit spans residues 3953–4004; that stretch reads SGTIYGWGHNHRGQLGGIEGAKVKVPTPCEALATLRPVQLIGGEQTLFAVTA. One copy of the RCC1 3-2 repeat lies at 4006-4058; it reads GKLYATGYGAGGRLGIGGTESVSTPTLLESIQHVFIKKVAVNSGGKHCLALSS. An RCC1 3-3 repeat occupies 4060–4110; sequence GEVYSWGEAEDGKLGHGNRSPCDRPRVIESLRGIEVVDVAAGGAHSACVTA. Residues 4112–4164 form an RCC1 3-4 repeat; it reads GDLYTWGKGRYGRLGHSDSEDQLKPKLVEALQGHRVIDIACGSGDAQTLCLTD. Residues 4166-4216 form an RCC1 3-5 repeat; the sequence is DTVWSWGDGDYGKLGRGGSDGCKVPMKIDSLTGLGVVKVECGSQFSVALTK. Residues 4218-4268 form an RCC1 3-6 repeat; sequence GAVYTWGKGDYHRLGHGSDDHVRRPRQVQGLQGKKVIAIATGSLHCVCCTE. The stretch at 4270–4320 is one RCC1 3-7 repeat; the sequence is GEVYTWGDNDEGQLGDGTTNAIQRPRLVAALQGKKVNRVACGSAHTLAWST. The HECT domain maps to 4459-4796; sequence DSLLLPHRVW…IHFCKSIDTD (338 aa). Cys-4764 functions as the Glycyl thioester intermediate in the catalytic mechanism. The disordered stretch occupies residues 4806–4836; it reads EPAADDSSEDSDNEDADSFASDSTQDYLTGH. The segment covering 4808–4822 has biased composition (acidic residues); the sequence is AADDSSEDSDNEDAD. Ser-4812, Ser-4813, and Ser-4816 each carry phosphoserine. Thr-4829 is subject to Phosphothreonine.

As to quaternary structure, interacts (when phosphorylated at Thr-4829 and sumoylated) with RNF8 (via FHA domain); this interaction increases after ionising radiation (IR) treatment. Interacts with XPA. Interacts with NEURL4. Via its interaction with NEURL4, may indirectly interact with CCP110 and CEP97. In terms of processing, phosphorylation at Thr-4829 is required for interaction with RNF8. Post-translationally, sumoylated with SUMO1 by PIAS4 in response to double-strand breaks (DSBs), promoting the interaction with RNF8. In terms of tissue distribution, highest levels are found in brain and testis with lower levels in heart, lung, liver, skeletal muscle and kidney. Little expression detected in spleen.

The protein localises to the cytoplasm. It localises to the cytoskeleton. Its subcellular location is the microtubule organizing center. The protein resides in the centrosome. It is found in the centriole. The protein localises to the nucleus. It catalyses the reaction S-ubiquitinyl-[E2 ubiquitin-conjugating enzyme]-L-cysteine + [acceptor protein]-L-lysine = [E2 ubiquitin-conjugating enzyme]-L-cysteine + N(6)-ubiquitinyl-[acceptor protein]-L-lysine.. The protein operates within protein modification; protein ubiquitination. E3 ubiquitin-protein ligase that regulates ubiquitin-dependent retention of repair proteins on damaged chromosomes. Recruited to sites of DNA damage in response to ionizing radiation (IR) and facilitates the assembly of UBE2N and RNF8 promoting DNA damage-induced formation of 'Lys-63'-linked ubiquitin chains. Acts as a mediator of binding specificity between UBE2N and RNF8. Involved in the maintenance of RNF168 levels. E3 ubiquitin-protein ligase that promotes the ubiquitination and proteasomal degradation of XPA which influences the circadian oscillation of DNA excision repair activity. By controlling the steady-state expression of the IGF1R receptor, indirectly regulates the insulin-like growth factor receptor signaling pathway. Also modulates iron metabolism by regulating the basal turnover of FBXL5. This chain is E3 ubiquitin-protein ligase HERC2, found in Mus musculus (Mouse).